We begin with the raw amino-acid sequence, 317 residues long: Inactive serine protease 45 (317 aa).

The signal sequence occupies residues 1–35; it reads MATSLRGLDAGPGSLRRWILICFAALLLLPPRPNL. Asparagine 40 carries an N-linked (GlcNAc...) asparagine glycan. The region spanning 44–291 is the Peptidase S1 domain; that stretch reads PVCGTPWWPD…YTIWIKDQVS (248 aa). A disulfide bridge connects residues cysteine 75 and cysteine 91. An N-linked (GlcNAc...) asparagine glycan is attached at asparagine 110. 3 cysteine pairs are disulfide-bonded: cysteine 172–cysteine 249, cysteine 207–cysteine 230, and cysteine 239–cysteine 267. N-linked (GlcNAc...) asparagine glycosylation occurs at asparagine 272.

The protein belongs to the peptidase S1 family.

The protein localises to the secreted. This Mus musculus (Mouse) protein is Inactive serine protease 45.